A 329-amino-acid chain; its full sequence is Protein RecA (329 aa).

63–70 is a binding site for ATP; it reads GNESSGKT.

It belongs to the RecA family.

The protein resides in the cytoplasm. Its function is as follows. Can catalyze the hydrolysis of ATP in the presence of single-stranded DNA, the ATP-dependent uptake of single-stranded DNA by duplex DNA, and the ATP-dependent hybridization of homologous single-stranded DNAs. It interacts with LexA causing its activation and leading to its autocatalytic cleavage. The polypeptide is Protein RecA (Malacoplasma penetrans (strain HF-2) (Mycoplasma penetrans)).